A 151-amino-acid chain; its full sequence is 3-dehydroquinate dehydratase (151 aa).

The active-site Proton acceptor is the Tyr24. Asn76, His82, and Asp89 together coordinate substrate. The active-site Proton donor is His102. Substrate-binding positions include 103-104 and Arg113; that span reads LS.

Belongs to the type-II 3-dehydroquinase family. Homododecamer.

The enzyme catalyses 3-dehydroquinate = 3-dehydroshikimate + H2O. Its pathway is metabolic intermediate biosynthesis; chorismate biosynthesis; chorismate from D-erythrose 4-phosphate and phosphoenolpyruvate: step 3/7. Functionally, catalyzes a trans-dehydration via an enolate intermediate. The chain is 3-dehydroquinate dehydratase from Acinetobacter baumannii (strain ATCC 17978 / DSM 105126 / CIP 53.77 / LMG 1025 / NCDC KC755 / 5377).